A 281-amino-acid chain; its full sequence is Cytosolic Fe-S cluster assembly factor CFD1 (281 aa).

24-31 (GKGGVGKS) is an ATP binding site. [4Fe-4S] cluster is bound by residues C201 and C204.

This sequence belongs to the Mrp/NBP35 ATP-binding proteins family. NUBP2/CFD1 subfamily. Heterotetramer of 2 NBP35 and 2 CFD1 chains. [4Fe-4S] cluster is required as a cofactor.

Its subcellular location is the cytoplasm. In terms of biological role, component of the cytosolic iron-sulfur (Fe/S) protein assembly (CIA) machinery. Required for maturation of extramitochondrial Fe-S proteins. The NBP35-CFD1 heterotetramer forms a Fe-S scaffold complex, mediating the de novo assembly of an Fe-S cluster and its transfer to target apoproteins. Required for biogenesis and export of both ribosomal subunits, which may reflect a role in assembly of the Fe/S clusters in RLI1, a protein which performs rRNA processing and ribosome export. This chain is Cytosolic Fe-S cluster assembly factor CFD1, found in Eremothecium gossypii (strain ATCC 10895 / CBS 109.51 / FGSC 9923 / NRRL Y-1056) (Yeast).